The sequence spans 115 residues: NADH-ubiquinone oxidoreductase chain 3 (115 aa).

Transmembrane regions (helical) follow at residues 3-23 (LIMVISINIILSSILILVAFW), 55-75 (FFLVAITFLLFDLEIALLLPI), and 84-104 (INTMLLAAFILVSILALGLAY).

The protein belongs to the complex I subunit 3 family. Core subunit of respiratory chain NADH dehydrogenase (Complex I) which is composed of 45 different subunits. Interacts with TMEM186. Interacts with TMEM242.

The protein resides in the mitochondrion inner membrane. It catalyses the reaction a ubiquinone + NADH + 5 H(+)(in) = a ubiquinol + NAD(+) + 4 H(+)(out). In terms of biological role, core subunit of the mitochondrial membrane respiratory chain NADH dehydrogenase (Complex I) which catalyzes electron transfer from NADH through the respiratory chain, using ubiquinone as an electron acceptor. Essential for the catalytic activity of complex I. The protein is NADH-ubiquinone oxidoreductase chain 3 of Scotinomys teguina (Alston's brown mouse).